The following is a 117-amino-acid chain: Large ribosomal subunit protein uL22 (117 aa).

It belongs to the universal ribosomal protein uL22 family. As to quaternary structure, part of the 50S ribosomal subunit.

In terms of biological role, this protein binds specifically to 23S rRNA; its binding is stimulated by other ribosomal proteins, e.g. L4, L17, and L20. It is important during the early stages of 50S assembly. It makes multiple contacts with different domains of the 23S rRNA in the assembled 50S subunit and ribosome. Functionally, the globular domain of the protein is located near the polypeptide exit tunnel on the outside of the subunit, while an extended beta-hairpin is found that lines the wall of the exit tunnel in the center of the 70S ribosome. The sequence is that of Large ribosomal subunit protein uL22 from Synechococcus elongatus (strain ATCC 33912 / PCC 7942 / FACHB-805) (Anacystis nidulans R2).